A 440-amino-acid chain; its full sequence is Xaa-Pro dipeptidase (440 aa).

The Mn(2+) site is built by Asp246, Asp257, His337, Glu382, and Glu421.

It belongs to the peptidase M24B family. Bacterial-type prolidase subfamily. Mn(2+) serves as cofactor.

It carries out the reaction Xaa-L-Pro dipeptide + H2O = an L-alpha-amino acid + L-proline. Its function is as follows. Splits dipeptides with a prolyl residue in the C-terminal position. This Aeromonas hydrophila subsp. hydrophila (strain ATCC 7966 / DSM 30187 / BCRC 13018 / CCUG 14551 / JCM 1027 / KCTC 2358 / NCIMB 9240 / NCTC 8049) protein is Xaa-Pro dipeptidase.